Here is a 426-residue protein sequence, read N- to C-terminus: Proline--tRNA ligase (426 aa).

This sequence belongs to the class-II aminoacyl-tRNA synthetase family. ProS type 2 subfamily. Homodimer.

It is found in the cytoplasm. The catalysed reaction is tRNA(Pro) + L-proline + ATP = L-prolyl-tRNA(Pro) + AMP + diphosphate. Its function is as follows. Catalyzes the attachment of proline to tRNA(Pro) in a two-step reaction: proline is first activated by ATP to form Pro-AMP and then transferred to the acceptor end of tRNA(Pro). This chain is Proline--tRNA ligase, found in Rickettsia africae (strain ESF-5).